Consider the following 104-residue polypeptide: Large ribosomal subunit protein uL24 (104 aa).

It belongs to the universal ribosomal protein uL24 family. In terms of assembly, part of the 50S ribosomal subunit.

Its function is as follows. One of two assembly initiator proteins, it binds directly to the 5'-end of the 23S rRNA, where it nucleates assembly of the 50S subunit. One of the proteins that surrounds the polypeptide exit tunnel on the outside of the subunit. The polypeptide is Large ribosomal subunit protein uL24 (Chelativorans sp. (strain BNC1)).